Consider the following 310-residue polypeptide: Glutarate 2-hydroxylase (310 aa).

His-160, Asp-162, and His-277 together coordinate Fe cation.

Belongs to the glutarate hydroxylase family. As to quaternary structure, homotetramer. The cofactor is Fe(2+).

It carries out the reaction glutarate + 2-oxoglutarate + O2 = (S)-2-hydroxyglutarate + succinate + CO2. It participates in amino-acid degradation. Acts as an alpha-ketoglutarate-dependent dioxygenase catalyzing hydroxylation of glutarate (GA) to L-2-hydroxyglutarate (L2HG). Functions in a L-lysine degradation pathway that proceeds via cadaverine, glutarate and L-2-hydroxyglutarate. In Shigella flexneri, this protein is Glutarate 2-hydroxylase.